The chain runs to 536 residues: Phosphoenolpyruvate carboxykinase (ATP) (536 aa).

3 residues coordinate substrate: Arg61, Tyr195, and Lys201. ATP-binding positions include Lys201, His220, and 236 to 244 (GLSGTGKTT). Mn(2+) is bound by residues Lys201 and His220. Asp257 contacts Mn(2+). Positions 285, 322, and 447 each coordinate ATP. Residue Arg322 participates in substrate binding.

This sequence belongs to the phosphoenolpyruvate carboxykinase (ATP) family. Mn(2+) is required as a cofactor.

It is found in the cytoplasm. The catalysed reaction is oxaloacetate + ATP = phosphoenolpyruvate + ADP + CO2. The protein operates within carbohydrate biosynthesis; gluconeogenesis. In terms of biological role, involved in the gluconeogenesis. Catalyzes the conversion of oxaloacetate (OAA) to phosphoenolpyruvate (PEP) through direct phosphoryl transfer between the nucleoside triphosphate and OAA. This chain is Phosphoenolpyruvate carboxykinase (ATP), found in Rhizobium etli (strain CIAT 652).